A 487-amino-acid chain; its full sequence is Putative beta-glucosidase 35 (487 aa).

Residues 1–27 (MGIRMGRRLLLITLLLGALLCNNVAYA) form the signal peptide. An a beta-D-glucoside-binding site is contributed by glutamine 48. N-linked (GlcNAc...) asparagine glycans are attached at residues asparagine 76 and asparagine 116. A beta-D-glucoside contacts are provided by residues histidine 151 and 200-201 (NE). Glutamate 201 acts as the Proton donor in catalysis. Cysteine 220 and cysteine 228 are oxidised to a cystine. Tyrosine 344 contributes to the a beta-D-glucoside binding site. Asparagine 369 carries an N-linked (GlcNAc...) asparagine glycan. Glutamate 414 is a binding site for a beta-D-glucoside. The active-site Nucleophile is the glutamate 414. 2 N-linked (GlcNAc...) asparagine glycosylation sites follow: asparagine 418 and asparagine 419. Phenylalanine 458 contacts a beta-D-glucoside.

It belongs to the glycosyl hydrolase 1 family.

It catalyses the reaction Hydrolysis of terminal, non-reducing beta-D-glucosyl residues with release of beta-D-glucose.. In Oryza sativa subsp. japonica (Rice), this protein is Putative beta-glucosidase 35 (BGLU35).